The chain runs to 391 residues: Methionine import ATP-binding protein MetN 2 (391 aa).

Residues 44–280 (VHVGKVFATP…PRHGATRALL (237 aa)) form the ABC transporter domain. Residue 77–84 (GRSGAGKS) coordinates ATP.

It belongs to the ABC transporter superfamily. Methionine importer (TC 3.A.1.24) family. The complex is composed of two ATP-binding proteins (MetN), two transmembrane proteins (MetI) and a solute-binding protein (MetQ).

The protein resides in the cell inner membrane. The enzyme catalyses L-methionine(out) + ATP + H2O = L-methionine(in) + ADP + phosphate + H(+). It carries out the reaction D-methionine(out) + ATP + H2O = D-methionine(in) + ADP + phosphate + H(+). In terms of biological role, part of the ABC transporter complex MetNIQ involved in methionine import. Responsible for energy coupling to the transport system. This Burkholderia ambifaria (strain ATCC BAA-244 / DSM 16087 / CCUG 44356 / LMG 19182 / AMMD) (Burkholderia cepacia (strain AMMD)) protein is Methionine import ATP-binding protein MetN 2.